A 49-amino-acid polypeptide reads, in one-letter code: Large ribosomal subunit protein bL33A (49 aa).

Belongs to the bacterial ribosomal protein bL33 family.

This Leuconostoc mesenteroides subsp. mesenteroides (strain ATCC 8293 / DSM 20343 / BCRC 11652 / CCM 1803 / JCM 6124 / NCDO 523 / NBRC 100496 / NCIMB 8023 / NCTC 12954 / NRRL B-1118 / 37Y) protein is Large ribosomal subunit protein bL33A.